Reading from the N-terminus, the 397-residue chain is Succinyl-diaminopimelate desuccinylase (397 aa).

Position 73 (His-73) interacts with Zn(2+). Asp-75 is a catalytic residue. Residue Asp-106 participates in Zn(2+) binding. Glu-140 serves as the catalytic Proton acceptor. Zn(2+)-binding residues include Glu-141, Glu-169, and His-366.

Belongs to the peptidase M20A family. DapE subfamily. Homodimer. Requires Zn(2+) as cofactor. Co(2+) serves as cofactor.

The enzyme catalyses N-succinyl-(2S,6S)-2,6-diaminopimelate + H2O = (2S,6S)-2,6-diaminopimelate + succinate. Its pathway is amino-acid biosynthesis; L-lysine biosynthesis via DAP pathway; LL-2,6-diaminopimelate from (S)-tetrahydrodipicolinate (succinylase route): step 3/3. Catalyzes the hydrolysis of N-succinyl-L,L-diaminopimelic acid (SDAP), forming succinate and LL-2,6-diaminopimelate (DAP), an intermediate involved in the bacterial biosynthesis of lysine and meso-diaminopimelic acid, an essential component of bacterial cell walls. In Rhizobium leguminosarum bv. trifolii (strain WSM2304), this protein is Succinyl-diaminopimelate desuccinylase.